Reading from the N-terminus, the 196-residue chain is UPF0314 protein Oant_0840 (196 aa).

4 helical membrane-spanning segments follow: residues 15–35 (WGLG…WLYF), 65–85 (WYTL…TVIA), 127–147 (FGDS…GFLI), and 151–171 (LPTK…LIVI).

Belongs to the UPF0314 family.

The protein resides in the cell membrane. The polypeptide is UPF0314 protein Oant_0840 (Brucella anthropi (strain ATCC 49188 / DSM 6882 / CCUG 24695 / JCM 21032 / LMG 3331 / NBRC 15819 / NCTC 12168 / Alc 37) (Ochrobactrum anthropi)).